The primary structure comprises 237 residues: Nodulation protein NolA (237 aa).

In terms of domain architecture, HTH merR-type spans R10–G79. Positions I13–H32 form a DNA-binding region, H-T-H motif.

Its function is as follows. Involved in genotype-specific nodulation of soybeans. The chain is Nodulation protein NolA (nolA) from Bradyrhizobium sp. (strain NC92).